A 124-amino-acid chain; its full sequence is Small ribosomal subunit protein uS12 (124 aa).

Asp-89 carries the post-translational modification 3-methylthioaspartic acid.

Belongs to the universal ribosomal protein uS12 family. In terms of assembly, part of the 30S ribosomal subunit. Contacts proteins S8 and S17. May interact with IF1 in the 30S initiation complex.

In terms of biological role, with S4 and S5 plays an important role in translational accuracy. Interacts with and stabilizes bases of the 16S rRNA that are involved in tRNA selection in the A site and with the mRNA backbone. Located at the interface of the 30S and 50S subunits, it traverses the body of the 30S subunit contacting proteins on the other side and probably holding the rRNA structure together. The combined cluster of proteins S8, S12 and S17 appears to hold together the shoulder and platform of the 30S subunit. The protein is Small ribosomal subunit protein uS12 of Glaesserella parasuis serovar 5 (strain SH0165) (Haemophilus parasuis).